The following is a 287-amino-acid chain: 4-diphosphocytidyl-2-C-methyl-D-erythritol kinase (287 aa).

Lysine 10 is a catalytic residue. Proline 92–alanine 102 contacts ATP. The active site involves aspartate 134.

This sequence belongs to the GHMP kinase family. IspE subfamily.

The catalysed reaction is 4-CDP-2-C-methyl-D-erythritol + ATP = 4-CDP-2-C-methyl-D-erythritol 2-phosphate + ADP + H(+). It participates in isoprenoid biosynthesis; isopentenyl diphosphate biosynthesis via DXP pathway; isopentenyl diphosphate from 1-deoxy-D-xylulose 5-phosphate: step 3/6. Functionally, catalyzes the phosphorylation of the position 2 hydroxy group of 4-diphosphocytidyl-2C-methyl-D-erythritol. The polypeptide is 4-diphosphocytidyl-2-C-methyl-D-erythritol kinase (Caldanaerobacter subterraneus subsp. tengcongensis (strain DSM 15242 / JCM 11007 / NBRC 100824 / MB4) (Thermoanaerobacter tengcongensis)).